Reading from the N-terminus, the 1207-residue chain is Plasma membrane calcium-transporting ATPase 4 (1207 aa).

Residues 1-100 are Cytoplasmic-facing; sequence MTNPTEHTLP…KTFLELVWEA (100 aa). At serine 13 the chain carries Phosphoserine. The chain crosses the membrane as a helical span at residues 101–121; sequence LQDVTLIILEIAAIISLVLSF. The Extracellular portion of the chain corresponds to 122–147; that stretch reads YRPPGGENEQCGLAVTSPEDEGEAEA. A helical transmembrane segment spans residues 148–168; sequence GWIEGAAILFSVIIVVLVTAF. The Cytoplasmic segment spans residues 169–368; sequence NDWSKEKQFR…LAVQIGKAGL (200 aa). The disordered stretch occupies residues 294-317; it reads EEEKKKKGKKQGVPENRNKAKTQD. A phosphoserine mark is found at serine 328 and serine 334. A helical transmembrane segment spans residues 369–389; it reads IMSAITVLILILYFVIDNFVI. Topologically, residues 390–408 are extracellular; that stretch reads QRRPWLAECTPIYVQYFVK. The helical transmembrane segment at 409-429 threads the bilayer; it reads FFIIGVTVLVVAVPEGLPLAV. Residues 430-843 are Cytoplasmic-facing; the sequence is TISLAYSVKK…RNVYDSISKF (414 aa). Catalysis depends on aspartate 465, which acts as the 4-aspartylphosphate intermediate. Aspartate 785 and aspartate 789 together coordinate Mg(2+). Residues 844–864 form a helical membrane-spanning segment; sequence LQFQLTVNVVAVIVAFTGACI. At 865 to 871 the chain is on the extracellular side; the sequence is TQDSPLK. A helical membrane pass occupies residues 872-892; that stretch reads AVQMLWVNLIMDTFASLALAT. The Cytoplasmic portion of the chain corresponds to 893–918; the sequence is EPPTDSLLKRRPYGRNKPLISRTMMK. The helical transmembrane segment at 919–939 threads the bilayer; it reads NILGHAVYQLTVIFFLVFAGE. The Extracellular segment spans residues 940–957; the sequence is KFFDIDSGRRAPLHSPPS. A helical membrane pass occupies residues 958–977; it reads QHYTIIFNTFVLMQLFNEIN. The Cytoplasmic segment spans residues 978-994; the sequence is SRKIHGERNVFSGIFRN. A helical membrane pass occupies residues 995-1015; the sequence is LIFCSVVLGTFISQIIIVEFG. At 1016-1028 the chain is on the extracellular side; the sequence is GKPFSCTKLTLSQ. A helical transmembrane segment spans residues 1029-1049; sequence WFWCLFIGIGELLWGQVISTI. The Cytoplasmic segment spans residues 1050–1207; that stretch reads PTQSLKFLKE…SPLHSLETSV (158 aa). The calmodulin-binding subdomain A stretch occupies residues 1086–1103; it reads LRRGQILWFRGLNRIQTQ. Position 1102 is a phosphothreonine; by PKC (threonine 1102). The segment at 1104–1113 is calmodulin-binding subdomain B; sequence IKVVKAFHSS. The disordered stretch occupies residues 1159 to 1181; that stretch reads VSKPGTKTSSLDGEVTPQTNKNN. Positions 1163–1181 are enriched in polar residues; it reads GTKTSSLDGEVTPQTNKNN.

The protein belongs to the cation transport ATPase (P-type) (TC 3.A.3) family. Type IIB subfamily. In terms of assembly, interacts with PDZD11. Interacts with SLC35G1 and STIM1. Interacts with calmodulin. Isoform 1 is detected in brain, heart, liver, testis and epididymis. Isoform 2 is detected in brain (at protein level), heart, seminal vesicle and epididymis. There is a shift in expression from isoform 1 to isoform 2 along the length of the epididymis from caput to cauda (at protein level).

The protein resides in the cell membrane. The protein localises to the cell projection. It localises to the cilium. It is found in the flagellum membrane. It carries out the reaction Ca(2+)(in) + ATP + H2O = Ca(2+)(out) + ADP + phosphate + H(+). Its activity is regulated as follows. Activated by calcium/calmodulin. Its function is as follows. Calcium/calmodulin-regulated and magnesium-dependent enzyme that catalyzes the hydrolysis of ATP coupled with the transport of calcium out of the cell. By regulating sperm cells calcium homeostasis, may play a role in sperm motility. In Bos taurus (Bovine), this protein is Plasma membrane calcium-transporting ATPase 4.